We begin with the raw amino-acid sequence, 549 residues long: CDK5RAP3 protein homolog (549 aa).

3 short sequence motifs (shuffled ATG8-binding motif) span residues 274-277 (IDWD), 285-288 (IDWD), and 333-336 (ISWD).

This sequence belongs to the CDK5RAP3 family. Substrate adapter component of the UFM1 ribosome E3 ligase (UREL) complex. Interacts with ATG8 family proteins.

In terms of biological role, substrate adapter of E3 ligase complexes mediating ufmylation, the covalent attachment of the ubiquitin-like modifier UFM1 to substrate proteins, and which is involved in various processes, such as ribosome recycling and reticulophagy (also called ER-phagy). In Arabidopsis thaliana (Mouse-ear cress), this protein is CDK5RAP3 protein homolog.